Here is a 563-residue protein sequence, read N- to C-terminus: Arginine--tRNA ligase (563 aa).

The 'HIGH' region motif lies at 121 to 131 (PNIAKPFSIGH).

The protein belongs to the class-I aminoacyl-tRNA synthetase family. Monomer.

It localises to the cytoplasm. It catalyses the reaction tRNA(Arg) + L-arginine + ATP = L-arginyl-tRNA(Arg) + AMP + diphosphate. The sequence is that of Arginine--tRNA ligase from Streptococcus pyogenes serotype M4 (strain MGAS10750).